The chain runs to 214 residues: Small ribosomal subunit protein uS5 (214 aa).

Residues L54 to V117 enclose the S5 DRBM domain.

This sequence belongs to the universal ribosomal protein uS5 family. As to quaternary structure, part of the 30S ribosomal subunit. Contacts protein S4.

With S4 and S12 plays an important role in translational accuracy. This chain is Small ribosomal subunit protein uS5, found in Sulfurisphaera tokodaii (strain DSM 16993 / JCM 10545 / NBRC 100140 / 7) (Sulfolobus tokodaii).